A 711-amino-acid polypeptide reads, in one-letter code: Amyloid beta precursor protein binding family B member 1 (711 aa).

Residue Ser135 is modified to Phosphoserine. Disordered regions lie at residues 140-257, 277-300, and 321-364; these read NTQG…SDLP, GTTQWEPPGRASPSQGNSPQEESQ, and EPSE…QRNA. Residues 156–174 are compositionally biased toward acidic residues; the sequence is EVEEEDEDEEEEDEEEEDL. Lys205 is modified (N6-acetyllysine). Over residues 224 to 235 the composition is skewed to polar residues; it reads SWATLSQGSPSY. The region spanning 254–286 is the WW domain; that stretch reads SDLPAGWMRVQDTSGTYYWHIPTGTTQWEPPGR. Positions 288–300 are enriched in polar residues; the sequence is SPSQGNSPQEESQ. PID domains follow at residues 365-533 and 538-700; these read NPGI…QVEF and NELV…LWGS. At Ser460 the chain carries Phosphoserine; by PKC. Ser518 bears the Phosphoserine mark. Residue Tyr548 is modified to Phosphotyrosine; by ABL1. Residue Ser611 is modified to Phosphoserine; by SGK1. N6-acetyllysine is present on Lys702.

As to quaternary structure, component of a complex, at least composed of APBB1, RASD1/DEXRAS1 and APP. Interacts (via PID domain 2) with APP (with the intracellular domain of the amyloid-beta precursor protein). Interacts (via PID domain 2) with RASD1/DEXRAS1; impairs the transcription activation activity. Interacts (via PID domain 1) with KAT5/TIP60. Interacts (via the WW domain) with the proline-rich region of APBB1IP. Interacts with TSHZ1 and TSHZ2. Interacts (via the WW domain) with histone H2AX (when phosphorylated on 'Tyr-142') and the proline-rich region of ENAH. Interacts with MAPK8. Interacts (via PID domain 1) with TSHZ3 (via homeobox domain). Interacts with SET. Found in a trimeric complex with HDAC1 and TSHZ3; the interaction between HDAC1 and APBB1 is mediated by TSHZ3. Interacts (via WWW domain) with NEK6. Interacts (via WWW domain) with ABL1. Interacts with RNF157. Interacts with ARF6. Polyubiquitination by RNF157 leads to degradation by the proteasome. In terms of processing, phosphorylation at Ser-611 by SGK1 promotes its localization to the nucleus. Phosphorylated following nuclear translocation. Phosphorylation at Tyr-547 by ABL1 enhances transcriptional activation activity and reduces the affinity for RASD1/DEXRAS1. Phosphorylated at Ser-460 by PKC upon insulin activation. Post-translationally, acetylation at Lys-205 and Lys-702 by KAT5 promotes its transcription activator activity. In terms of tissue distribution, brain, not in liver, very low in other tissues. The long (neuron-specific) form is expressed only in brain.

It is found in the cell membrane. The protein localises to the cytoplasm. Its subcellular location is the nucleus. The protein resides in the cell projection. It localises to the growth cone. It is found in the nucleus speckle. Functionally, transcription coregulator that can have both coactivator and corepressor functions. Adapter protein that forms a transcriptionally active complex with the gamma-secretase-derived amyloid precursor protein (APP) intracellular domain. Plays a central role in the response to DNA damage by translocating to the nucleus and inducing apoptosis. May act by specifically recognizing and binding histone H2AX phosphorylated on 'Tyr-142' (H2AXY142ph) at double-strand breaks (DSBs), recruiting other pro-apoptosis factors such as MAPK8/JNK1. Required for histone H4 acetylation at double-strand breaks (DSBs). Its ability to specifically bind modified histones and chromatin modifying enzymes such as KAT5/TIP60, probably explains its transcription activation activity. Functions in association with TSHZ3, SET and HDAC factors as a transcriptional repressor, that inhibits the expression of CASP4. Associates with chromatin in a region surrounding the CASP4 transcriptional start site(s). Involved in hippocampal neurite branching and neuromuscular junction formation, as a result plays a role in spatial memory functioning. Plays a role in the maintenance of lens transparency. May play a role in muscle cell strength. Acts as a molecular adapter that functions in neurite outgrowth by activating the RAC1-ARF6 axis upon insulin treatment. The chain is Amyloid beta precursor protein binding family B member 1 from Rattus norvegicus (Rat).